A 459-amino-acid polypeptide reads, in one-letter code: Ribulose bisphosphate carboxylase (459 aa).

Substrate is bound at residue Asn-111. The Proton acceptor role is filled by Lys-166. Residue Lys-168 coordinates substrate. Mg(2+) is bound by residues Lys-191, Asp-193, and Glu-194. At Lys-191 the chain carries N6-carboxylysine. The active-site Proton acceptor is His-287. Arg-288, His-321, and Ser-368 together coordinate substrate.

The protein belongs to the RuBisCO large chain family. Type II subfamily. As to quaternary structure, homodimer. Requires Mg(2+) as cofactor.

The enzyme catalyses 2 (2R)-3-phosphoglycerate + 2 H(+) = D-ribulose 1,5-bisphosphate + CO2 + H2O. The catalysed reaction is D-ribulose 1,5-bisphosphate + O2 = 2-phosphoglycolate + (2R)-3-phosphoglycerate + 2 H(+). RuBisCO catalyzes two reactions: the carboxylation of D-ribulose 1,5-bisphosphate, the primary event in carbon dioxide fixation, as well as the oxidative fragmentation of the pentose substrate. Both reactions occur simultaneously and in competition at the same active site. This chain is Ribulose bisphosphate carboxylase, found in Polaromonas naphthalenivorans (strain CJ2).